A 507-amino-acid chain; its full sequence is Ribosomal protein uS12 methylthiotransferase RimO (507 aa).

Positions 13 to 124 (RRVALLTLGC…ISDRLGAVLA (112 aa)) constitute an MTTase N-terminal domain. [4Fe-4S] cluster-binding residues include cysteine 22, cysteine 58, and cysteine 87. The disordered stretch occupies residues 150 to 175 (AAVSLPGHGTRAAAAGPGGRSAPVEV). Over residues 155 to 172 (PGHGTRAAAAGPGGRSAP) the composition is skewed to low complexity. The region spanning 191–422 (LDTGPVASLK…ALADELCAQR (232 aa)) is the Radical SAM core domain. Cysteine 205, cysteine 209, and cysteine 212 together coordinate [4Fe-4S] cluster. In terms of domain architecture, TRAM spans 424-497 (EQRLGSTVQV…GVDLVAVPDG (74 aa)).

Belongs to the methylthiotransferase family. RimO subfamily. It depends on [4Fe-4S] cluster as a cofactor.

It localises to the cytoplasm. The enzyme catalyses L-aspartate(89)-[ribosomal protein uS12]-hydrogen + (sulfur carrier)-SH + AH2 + 2 S-adenosyl-L-methionine = 3-methylsulfanyl-L-aspartate(89)-[ribosomal protein uS12]-hydrogen + (sulfur carrier)-H + 5'-deoxyadenosine + L-methionine + A + S-adenosyl-L-homocysteine + 2 H(+). Catalyzes the methylthiolation of an aspartic acid residue of ribosomal protein uS12. The protein is Ribosomal protein uS12 methylthiotransferase RimO of Salinispora arenicola (strain CNS-205).